A 582-amino-acid chain; its full sequence is Urocanate reductase (582 aa).

Positions 1 to 20 are cleaved as a signal peptide; sequence MHYKKSIIGIAVTATAIIAG. The N-palmitoyl cysteine moiety is linked to residue Cys-21. Cys-21 carries the S-diacylglycerol cysteine lipid modification. Thr-93 is subject to FMN phosphoryl threonine. 8 residues coordinate FAD: Ala-143, Glu-162, Asn-170, Ser-171, Gly-175, Ala-176, Ala-285, and Asp-352. Arg-411 (proton donor) is an active-site residue. FAD contacts are provided by His-521, Glu-550, and Ala-565.

The protein belongs to the FAD-dependent oxidoreductase 2 family. FRD/SDH subfamily. Requires FAD as cofactor. FMN serves as cofactor.

The protein resides in the cell membrane. The catalysed reaction is dihydrourocanate + A = urocanate + AH2. Functionally, catalyzes the two-electron reduction of urocanate to dihydrourocanate (also named imidazole propionate or deamino-histidine). The physiological electron donor is unknown; it might be the membrane-bound tetraheme cytochrome c (CymA). Enables anaerobic growth with urocanate as a sole terminal electron acceptor, and thus can provide the cells with a niche where no other bacteria can compete and survive. Is unable to reduce cinnamate and other unsaturated organic acids such as acrylic, crotonic, fumaric and orotic acids. Has no fumarate reductase or succinate dehydrogenase activity. This is Urocanate reductase (urdA) from Shewanella oneidensis (strain ATCC 700550 / JCM 31522 / CIP 106686 / LMG 19005 / NCIMB 14063 / MR-1).